The sequence spans 417 residues: Probable medium-chain specific acyl-CoA dehydrogenase 10, mitochondrial (417 aa).

The transit peptide at 1 to 15 (MLSRIATSSLGLSRS) directs the protein to the mitochondrion. FAD-binding positions include 148–157 (YCVTEPGAGS) and 181–183 (WIT). Ser-157 contributes to the substrate binding site. Position 268–271 (268–271 (DMTR)) interacts with substrate. Residues 306–307 (HQ) and 364–368 (QIFGG) each bind FAD. The Proton acceptor role is filled by Glu-391. Gly-392 provides a ligand contact to substrate. Position 393–395 (393–395 (TSQ)) interacts with FAD.

This sequence belongs to the acyl-CoA dehydrogenase family. In terms of assembly, homotetramer. It depends on FAD as a cofactor. In terms of tissue distribution, expressed in the epidermis and intestine.

Its subcellular location is the mitochondrion matrix. It catalyses the reaction a medium-chain 2,3-saturated fatty acyl-CoA + oxidized [electron-transfer flavoprotein] + H(+) = a medium-chain (2E)-enoyl-CoA + reduced [electron-transfer flavoprotein]. It functions in the pathway lipid metabolism; mitochondrial fatty acid beta-oxidation. Functionally, this enzyme is specific for acyl chain lengths of 4 to 16. The protein is Probable medium-chain specific acyl-CoA dehydrogenase 10, mitochondrial (acdh-10) of Caenorhabditis elegans.